Here is a 382-residue protein sequence, read N- to C-terminus: Zinc metalloproteinase nas-7 (382 aa).

The signal sequence occupies residues 1–18 (MLLPWIITIVTVIPATLG). The propeptide occupies 19 to 79 (HRNRVQDDEM…DIRLPRRHKR (61 aa)). One can recognise a Peptidase M12A domain in the interval 80–273 (NGVSRAAKLW…SKINRMYNCP (194 aa)). 5 disulfide bridges follow: Cys-122–Cys-272, Cys-144–Cys-163, Cys-348–Cys-382, Cys-355–Cys-375, and Cys-362–Cys-379. His-171 provides a ligand contact to Zn(2+). The active site involves Glu-172. Positions 175 and 181 each coordinate Zn(2+). A ShKT domain is found at 348 to 382 (CEDRITVCWWTADRCRSPAIYQVMSSLCPKTCKFC).

Zn(2+) is required as a cofactor. As to expression, expressed in the head of adult hermaphrodites but not within pharynx cells. Expressed in pharyngeal muscles, mc cells, intestine, hypodermal seam cells, arcade cells, spermatheca, vulva and rectal epithelial cells.

It is found in the secreted. In terms of biological role, metalloprotease. This chain is Zinc metalloproteinase nas-7 (nas-7), found in Caenorhabditis elegans.